The chain runs to 475 residues: Ribulose bisphosphate carboxylase large chain (475 aa).

Residues 1–2 (MS) constitute a propeptide that is removed on maturation. N-acetylproline is present on proline 3. Lysine 14 carries the post-translational modification N6,N6,N6-trimethyllysine. The substrate site is built by asparagine 123 and threonine 173. The Proton acceptor role is filled by lysine 175. Lysine 177 contacts substrate. Residues lysine 201, aspartate 203, and glutamate 204 each coordinate Mg(2+). Lysine 201 carries the N6-carboxylysine modification. The Proton acceptor role is filled by histidine 294. The substrate site is built by arginine 295, histidine 327, and serine 379.

This sequence belongs to the RuBisCO large chain family. Type I subfamily. As to quaternary structure, heterohexadecamer of 8 large chains and 8 small chains. The cofactor is Mg(2+).

The protein resides in the plastid. It catalyses the reaction 2 (2R)-3-phosphoglycerate + 2 H(+) = D-ribulose 1,5-bisphosphate + CO2 + H2O. The catalysed reaction is D-ribulose 1,5-bisphosphate + O2 = 2-phosphoglycolate + (2R)-3-phosphoglycerate + 2 H(+). Its function is as follows. RuBisCO catalyzes two reactions: the carboxylation of D-ribulose 1,5-bisphosphate, the primary event in carbon dioxide fixation, as well as the oxidative fragmentation of the pentose substrate in the photorespiration process. Both reactions occur simultaneously and in competition at the same active site. The sequence is that of Ribulose bisphosphate carboxylase large chain from Aneura mirabilis (Parasitic liverwort).